Consider the following 106-residue polypeptide: ATP-dependent Clp protease adapter protein ClpS (106 aa).

This sequence belongs to the ClpS family. Binds to the N-terminal domain of the chaperone ClpA.

In terms of biological role, involved in the modulation of the specificity of the ClpAP-mediated ATP-dependent protein degradation. The sequence is that of ATP-dependent Clp protease adapter protein ClpS from Vibrio parahaemolyticus serotype O3:K6 (strain RIMD 2210633).